The following is a 297-amino-acid chain: Light-independent protochlorophyllide reductase iron-sulfur ATP-binding protein (297 aa).

Residues 41–46 (GIGKST) and lysine 70 contribute to the ATP site. A Mg(2+)-binding site is contributed by serine 45. Positions 126 and 160 each coordinate [4Fe-4S] cluster. ATP contacts are provided by residues 211 to 212 (NR) and 235 to 237 (PDL).

The protein belongs to the NifH/BchL/ChlL family. As to quaternary structure, homodimer. Protochlorophyllide reductase is composed of three subunits; BchL, BchN and BchB. Requires [4Fe-4S] cluster as cofactor.

The enzyme catalyses chlorophyllide a + oxidized 2[4Fe-4S]-[ferredoxin] + 2 ADP + 2 phosphate = protochlorophyllide a + reduced 2[4Fe-4S]-[ferredoxin] + 2 ATP + 2 H2O. It functions in the pathway porphyrin-containing compound metabolism; bacteriochlorophyll biosynthesis (light-independent). Functionally, component of the dark-operative protochlorophyllide reductase (DPOR) that uses Mg-ATP and reduced ferredoxin to reduce ring D of protochlorophyllide (Pchlide) to form chlorophyllide a (Chlide). This reaction is light-independent. The L component serves as a unique electron donor to the NB-component of the complex, and binds Mg-ATP. This Methylobacterium radiotolerans (strain ATCC 27329 / DSM 1819 / JCM 2831 / NBRC 15690 / NCIMB 10815 / 0-1) protein is Light-independent protochlorophyllide reductase iron-sulfur ATP-binding protein.